We begin with the raw amino-acid sequence, 344 residues long: MNLRIGVIGTGAIGKEHINRITNKLSGAEITAVTDVNQEAAQQTVQDFNLNASVYPDDDSLLAAENVDAVLVTSWGPAHESSVLKAIQHGKHVFCEKPLATTAEGCMRIVEEEMKTGKRLVQVGFMRRYDSGYVQLKEAIDNRVVGEPLMIHCAHRNPTVASNYSTEMAVVDTLVHEIDVLHWLVNDDYESVQVIYPKKSKNALPHLKDPQMVIIETKGGIVINAEIYVNCKYGYDIQCEIVGEDGIIKLPEPSSISLRKEGKFSTDILMDWQRRFVAAYDVEIQDFIDSIRNKGEVSGPTAWDGYIAAVTTDACVKAQESGQKEPVALQEKPAFYQSFTTVNK.

The protein belongs to the Gfo/Idh/MocA family. As to quaternary structure, homotetramer.

It catalyses the reaction myo-inositol + NAD(+) = scyllo-inosose + NADH + H(+). The enzyme catalyses 1D-chiro-inositol + NAD(+) = scyllo-inosine + NADH + H(+). Its pathway is polyol metabolism; myo-inositol degradation into acetyl-CoA; acetyl-CoA from myo-inositol: step 1/7. In terms of biological role, involved in the oxidation of myo-inositol (MI) and D-chiro-inositol (DCI) to 2-keto-myo-inositol (2KMI or 2-inosose) and 1-keto-D-chiro-inositol (1KDCI), respectively. The chain is Inositol 2-dehydrogenase/D-chiro-inositol 3-dehydrogenase from Bacillus velezensis (strain DSM 23117 / BGSC 10A6 / LMG 26770 / FZB42) (Bacillus amyloliquefaciens subsp. plantarum).